Reading from the N-terminus, the 121-residue chain is Snaclec coagulation factor IX-binding protein subunit A (121 aa).

Residues 1–120 (YEGHCYQTFK…CGERNPFVCE (120 aa)) form the C-type lectin domain. Intrachain disulfides connect cysteine 22–cysteine 119 and cysteine 94–cysteine 111. Serine 33, glutamate 35, and glutamate 39 together coordinate Ca(2+). Glutamate 120 lines the Ca(2+) pocket.

The protein belongs to the snaclec family. Heterodimer of subunits A and B; disulfide-linked. In terms of tissue distribution, expressed by the venom gland.

It is found in the secreted. Its function is as follows. Anticoagulant protein which binds to the gamma-carboxyglutamic acid-domain regions of factor IX (F9) (but not factor X) in the presence of calcium with a 1 to 1 stoichiometry. This chain is Snaclec coagulation factor IX-binding protein subunit A, found in Gloydius halys (Chinese water mocassin).